We begin with the raw amino-acid sequence, 317 residues long: Small glutamine-rich tetratricopeptide repeat-containing protein 2 (317 aa).

TPR repeat units follow at residues 14–48, 83–116, 118–150, and 151–184; these read LKQA…KPEE, AEKL…DPTS, VYYS…DPHH, and ARAF…DPNN. Over residues 198 to 215 the composition is skewed to polar residues; that stretch reads LNQPSDSSATSGADQART. Disordered regions lie at residues 198-224 and 298-317; these read LNQP…PDLG and MNNN…PPPQ.

The protein belongs to the SGT family.

The protein resides in the cytoplasm. The protein localises to the nucleus. Functionally, co-chaperone that binds to the molecular chaperone Hsp70 and regulates Hsp70 ATPase activity. The protein is Small glutamine-rich tetratricopeptide repeat-containing protein 2 (sgt2) of Schizosaccharomyces pombe (strain 972 / ATCC 24843) (Fission yeast).